Consider the following 155-residue polypeptide: Non-secretory ribonuclease (155 aa).

The signal sequence occupies residues 1 to 25 (MGPKLLESRLCLLLLLGLVLMLASC). Lys33 serves as a coordination point for substrate. The active-site Proton acceptor is His38. An N-linked (GlcNAc...) asparagine glycan is attached at Asn41. Disulfide bonds link Cys47-Cys106, Cys61-Cys118, Cys79-Cys133, and Cys86-Cys94. 3'-nitrotyrosine is present on Tyr57. 62 to 66 (KDINT) lines the substrate pocket. N-linked (GlcNAc...) asparagine glycans are attached at residues Asn83, Asn88, and Asn107. His150 functions as the Proton donor in the catalytic mechanism.

This sequence belongs to the pancreatic ribonuclease family. Interacts with and forms a tight 1:1 complex with RNH1. Dimerization of two such complexes may occur.

It is found in the lysosome. Its subcellular location is the cytoplasmic granule. The catalysed reaction is an [RNA] containing cytidine + H2O = an [RNA]-3'-cytidine-3'-phosphate + a 5'-hydroxy-ribonucleotide-3'-[RNA].. The enzyme catalyses an [RNA] containing uridine + H2O = an [RNA]-3'-uridine-3'-phosphate + a 5'-hydroxy-ribonucleotide-3'-[RNA].. Functionally, this is a non-secretory ribonuclease. It is a pyrimidine specific nuclease with a slight preference for U. Cytotoxin and helminthotoxin. Possesses a wide variety of biological activities. In Mus musculus (Mouse), this protein is Non-secretory ribonuclease (Rnase2).